A 30-amino-acid polypeptide reads, in one-letter code: Cyclotide cter-F (30 aa).

Positions 1 to 30 (GIPCGESCVFIPCISSVVGCSCKSKVCYLD) form a cross-link, cyclopeptide (Gly-Asp). 3 disulfide bridges follow: Cys4–Cys20, Cys8–Cys22, and Cys13–Cys27.

Contains 3 disulfide bonds. Post-translationally, this is a cyclic peptide.

Probably participates in a plant defense mechanism. The protein is Cyclotide cter-F of Clitoria ternatea (Butterfly pea).